The primary structure comprises 441 residues: Zinc finger and BTB domain-containing protein 8A (441 aa).

Residues 24–92 (CDCSILVEGK…VYSGKLSLTG (69 aa)) form the BTB domain. 2 stretches are compositionally biased toward polar residues: residues 146–170 (ERSS…SPDQ) and 178–197 (KSWS…QQPL). Residues 146 to 252 (ERSSFYSSGW…SEEQAQMNAE (107 aa)) form a disordered region. 2 positions are modified to phosphoserine: serine 161 and serine 167. Glycyl lysine isopeptide (Lys-Gly) (interchain with G-Cter in SUMO2) cross-links involve residues lysine 178, lysine 182, and lysine 199. Positions 198–208 (TKHEQRKDSIK) are enriched in basic and acidic residues. Residues 234 to 248 (SDSSSHASQSEEQAQ) show a composition bias toward low complexity. 2 C2H2-type zinc fingers span residues 282 to 304 (FKCP…LRCH) and 310 to 333 (YPCQ…RTIH). A Glycyl lysine isopeptide (Lys-Gly) (interchain with G-Cter in SUMO2) cross-link involves residue lysine 437.

The protein resides in the nucleus. In terms of biological role, may be involved in transcriptional regulation. In Bos taurus (Bovine), this protein is Zinc finger and BTB domain-containing protein 8A (ZBTB8A).